The chain runs to 93 residues: Cell division topological specificity factor (93 aa).

This sequence belongs to the MinE family.

Prevents the cell division inhibition by proteins MinC and MinD at internal division sites while permitting inhibition at polar sites. This ensures cell division at the proper site by restricting the formation of a division septum at the midpoint of the long axis of the cell. In Agathobacter rectalis (strain ATCC 33656 / DSM 3377 / JCM 17463 / KCTC 5835 / VPI 0990) (Eubacterium rectale), this protein is Cell division topological specificity factor.